The sequence spans 88 residues: MAASHSLGEKILIKLIRFYQIVISPLIGPRCRFVPTCSCYGLEAIKTHGAVRGAWLTLKRILKCHPLNAGGYDPVPPKSDNHSKENKK.

The segment at 67-88 (LNAGGYDPVPPKSDNHSKENKK) is disordered. The segment covering 79 to 88 (SDNHSKENKK) has biased composition (basic and acidic residues).

It belongs to the UPF0161 family.

It localises to the cell inner membrane. Its function is as follows. Could be involved in insertion of integral membrane proteins into the membrane. The protein is Putative membrane protein insertion efficiency factor of Actinobacillus succinogenes (strain ATCC 55618 / DSM 22257 / CCUG 43843 / 130Z).